The chain runs to 276 residues: Formamidopyrimidine-DNA glycosylase (276 aa).

The active-site Schiff-base intermediate with DNA is the Pro-2. Glu-3 serves as the catalytic Proton donor. Lys-58 functions as the Proton donor; for beta-elimination activity in the catalytic mechanism. DNA is bound by residues His-94, Arg-112, and Arg-157. The segment at 242–276 (FVYDRAGLPCRVCGTPIKQIVQGQRSTYFCPTCQR) adopts an FPG-type zinc-finger fold. Residue Arg-266 is the Proton donor; for delta-elimination activity of the active site.

It belongs to the FPG family. Monomer. It depends on Zn(2+) as a cofactor.

It catalyses the reaction Hydrolysis of DNA containing ring-opened 7-methylguanine residues, releasing 2,6-diamino-4-hydroxy-5-(N-methyl)formamidopyrimidine.. The enzyme catalyses 2'-deoxyribonucleotide-(2'-deoxyribose 5'-phosphate)-2'-deoxyribonucleotide-DNA = a 3'-end 2'-deoxyribonucleotide-(2,3-dehydro-2,3-deoxyribose 5'-phosphate)-DNA + a 5'-end 5'-phospho-2'-deoxyribonucleoside-DNA + H(+). Its function is as follows. Involved in base excision repair of DNA damaged by oxidation or by mutagenic agents. Acts as a DNA glycosylase that recognizes and removes damaged bases. Has a preference for oxidized purines, such as 7,8-dihydro-8-oxoguanine (8-oxoG). Has AP (apurinic/apyrimidinic) lyase activity and introduces nicks in the DNA strand. Cleaves the DNA backbone by beta-delta elimination to generate a single-strand break at the site of the removed base with both 3'- and 5'-phosphates. The polypeptide is Formamidopyrimidine-DNA glycosylase (Paraburkholderia phytofirmans (strain DSM 17436 / LMG 22146 / PsJN) (Burkholderia phytofirmans)).